The sequence spans 325 residues: Probable tRNA pseudouridine synthase B (325 aa).

The active-site Nucleophile is the aspartate 69. Residues 236–311 (LPKIVIKDSA…IAADIQRVMM (76 aa)) enclose the PUA domain.

This sequence belongs to the pseudouridine synthase TruB family. Type 2 subfamily.

It carries out the reaction uridine(55) in tRNA = pseudouridine(55) in tRNA. Functionally, could be responsible for synthesis of pseudouridine from uracil-55 in the psi GC loop of transfer RNAs. This chain is Probable tRNA pseudouridine synthase B, found in Archaeoglobus fulgidus (strain ATCC 49558 / DSM 4304 / JCM 9628 / NBRC 100126 / VC-16).